A 184-amino-acid chain; its full sequence is Peptide deformylase 2 (184 aa).

Cys-110 and His-153 together coordinate Fe cation. The active site involves Glu-154. His-157 is a binding site for Fe cation.

It belongs to the polypeptide deformylase family. It depends on Fe(2+) as a cofactor.

It catalyses the reaction N-terminal N-formyl-L-methionyl-[peptide] + H2O = N-terminal L-methionyl-[peptide] + formate. Its function is as follows. Removes the formyl group from the N-terminal Met of newly synthesized proteins. Requires at least a dipeptide for an efficient rate of reaction. N-terminal L-methionine is a prerequisite for activity but the enzyme has broad specificity at other positions. This is Peptide deformylase 2 from Bacillus cereus (strain ATCC 14579 / DSM 31 / CCUG 7414 / JCM 2152 / NBRC 15305 / NCIMB 9373 / NCTC 2599 / NRRL B-3711).